The primary structure comprises 396 residues: Ribosomal RNA large subunit methyltransferase I (396 aa).

One can recognise a PUA domain in the interval 2–79 (AIRIKLKPGR…REEEIDRAFF (78 aa)).

This sequence belongs to the methyltransferase superfamily. RlmI family.

The protein localises to the cytoplasm. The enzyme catalyses cytidine(1962) in 23S rRNA + S-adenosyl-L-methionine = 5-methylcytidine(1962) in 23S rRNA + S-adenosyl-L-homocysteine + H(+). Its function is as follows. Specifically methylates the cytosine at position 1962 (m5C1962) of 23S rRNA. The sequence is that of Ribosomal RNA large subunit methyltransferase I from Shewanella putrefaciens (strain CN-32 / ATCC BAA-453).